We begin with the raw amino-acid sequence, 248 residues long: Tropomyosin alpha-4 chain (248 aa).

Alanine 2 carries the post-translational modification N-acetylalanine. Positions 2–248 form a coiled coil; sequence AGLNSLEAVK…DQTLDELNCI (247 aa). Position 6 is a phosphoserine (serine 6). The interval 16–47 is disordered; that stretch reads ALQQQADEAEDRAQGLQRELDGERERREKAEG. Over residues 33-47 the composition is skewed to basic and acidic residues; the sequence is RELDGERERREKAEG. Lysine 177 and lysine 215 each carry N6-acetyllysine. Threonine 216 is subject to Phosphothreonine.

It belongs to the tropomyosin family. As to quaternary structure, homodimer. Heterodimer of an alpha (TPM1, TPM3 or TPM4) and a beta (TPM2) chain.

It localises to the cytoplasm. Its subcellular location is the cytoskeleton. Binds to actin filaments in muscle and non-muscle cells. Plays a central role, in association with the troponin complex, in the calcium dependent regulation of vertebrate striated muscle contraction. Smooth muscle contraction is regulated by interaction with caldesmon. In non-muscle cells is implicated in stabilizing cytoskeleton actin filaments. Binds calcium. The chain is Tropomyosin alpha-4 chain (TPM4) from Equus caballus (Horse).